Here is a 267-residue protein sequence, read N- to C-terminus: Phosphatidylcholine synthase (267 aa).

At 1 to 42 (MILWRIVRPGAAMAYVQTGLVLIAEAMDTQQDSLKPRPAMRA) the chain is on the cytoplasmic side. The chain crosses the membrane as a helical span at residues 43–63 (AAFSVHVFTAFGAAIALLAML). At 64-69 (EAVREH) the chain is on the periplasmic side. A helical transmembrane segment spans residues 70–90 (WAAMFQWLGVALIIDAIDGPI). At 91 to 102 (ARRLDVKNVQPN) the chain is on the cytoplasmic side. A helical membrane pass occupies residues 103–123 (WSGDVLDLVVDFVTYVFVPAY). A124 is a topological domain (periplasmic). Residues 125 to 145 (IVASGLLLPVAAPLLGVAIIV) traverse the membrane as a helical segment. The Cytoplasmic portion of the chain corresponds to 146–162 (TSALYFADLRMKADDNH). The chain crosses the membrane as a helical span at residues 163 to 183 (FRGFPALWNAAAFYLFLLHWP). P184 is a topological domain (periplasmic). Residues 185 to 205 (LWSTLLVAALVVLTFVPFHVL) traverse the membrane as a helical segment. Residues 206–215 (HPVRVVRLRW) lie on the Cytoplasmic side of the membrane. The chain crosses the membrane as a helical span at residues 216-236 (LTMSLIGIWAVLSLYTLDMDF). Residues 237 to 239 (RVG) are Periplasmic-facing. A helical transmembrane segment spans residues 240-260 (PGVTLALCAIALWISFSDALI). Residues 261-267 (RFARSFA) are Cytoplasmic-facing.

This sequence belongs to the CDP-alcohol phosphatidyltransferase class-I family. The cofactor is Mn(2+).

The protein resides in the cell inner membrane. The catalysed reaction is a CDP-1,2-diacyl-sn-glycerol + choline = a 1,2-diacyl-sn-glycero-3-phosphocholine + CMP + H(+). In terms of biological role, condenses choline with CDP-diglyceride to produce phosphatidylcholine and CMP. The protein is Phosphatidylcholine synthase of Bradyrhizobium diazoefficiens (strain JCM 10833 / BCRC 13528 / IAM 13628 / NBRC 14792 / USDA 110).